We begin with the raw amino-acid sequence, 258 residues long: Hydroxyacylglutathione hydrolase (258 aa).

7 residues coordinate Zn(2+): H56, H58, D60, H61, H112, D132, and H170.

Belongs to the metallo-beta-lactamase superfamily. Glyoxalase II family. Monomer. Zn(2+) serves as cofactor.

It catalyses the reaction an S-(2-hydroxyacyl)glutathione + H2O = a 2-hydroxy carboxylate + glutathione + H(+). It participates in secondary metabolite metabolism; methylglyoxal degradation; (R)-lactate from methylglyoxal: step 2/2. Its function is as follows. Thiolesterase that catalyzes the hydrolysis of S-D-lactoyl-glutathione to form glutathione and D-lactic acid. This chain is Hydroxyacylglutathione hydrolase, found in Pseudomonas aeruginosa (strain ATCC 15692 / DSM 22644 / CIP 104116 / JCM 14847 / LMG 12228 / 1C / PRS 101 / PAO1).